The primary structure comprises 188 residues: dCTP deaminase (188 aa).

Residues 111–116, 135–137, glutamine 156, tyrosine 170, and glutamine 180 each bind dCTP; these read KSTYAR and TLE. Catalysis depends on glutamate 137, which acts as the Proton donor/acceptor.

It belongs to the dCTP deaminase family. Homotrimer.

The catalysed reaction is dCTP + H2O + H(+) = dUTP + NH4(+). The protein operates within pyrimidine metabolism; dUMP biosynthesis; dUMP from dCTP (dUTP route): step 1/2. Functionally, catalyzes the deamination of dCTP to dUTP. This is dCTP deaminase from Cupriavidus metallidurans (strain ATCC 43123 / DSM 2839 / NBRC 102507 / CH34) (Ralstonia metallidurans).